The primary structure comprises 201 residues: MQTSPLLTQLMEALRCLPGVGPKSAQRMAFTLLQRDRSGGMRLAQALTRAMSEIGHCADCRTFTEQEVCNICSNPRRQENGQICVVESPADIYAIEQTGQFSGRYFVLMGHLSPLDGIGPDDIGLDRLEQRLAEEKITEVILATNPTVEGEATANYIAELCAQYDVEASRIAHGVPVGGELEMVDGTTLSHSLAGRHKIRF.

The C4-type zinc-finger motif lies at 57 to 72 (CADCRTFTEQEVCNIC). In terms of domain architecture, Toprim spans 81–176 (GQICVVESPA…EASRIAHGVP (96 aa)).

The protein belongs to the RecR family.

In terms of biological role, may play a role in DNA repair. It seems to be involved in an RecBC-independent recombinational process of DNA repair. It may act with RecF and RecO. The polypeptide is Recombination protein RecR (Shigella boydii serotype 18 (strain CDC 3083-94 / BS512)).